We begin with the raw amino-acid sequence, 281 residues long: MIENRRGLDIFCHIMLIIGVLLILFPLYVAFVAASLDDSQVFQAPMTLIPGPHLWQNISHIWHAGVGNNSTPFGLMLLNSFVMAFAITVGKITVSILSAYAIVYFRFPLRNLFFWLIFLTLMLPVEVRIFPTIEVIANLNLLDSYTGLTLPLMASATATFLFRQFFMTLPDELLEAARIDGAGAMRFFWDIVLPLSKTNLAALFVITFIYGWNQYLWPILITSDASMGTAVAGIRSMISTSGAPTQWNQVMAAMILTLIPPVVVVLLMQRWFVRGLVDSEK.

Transmembrane regions (helical) follow at residues 14 to 34 (IMLI…FVAA), 85 to 105 (FAIT…IVYF), 113 to 133 (FFWL…FPTI), 142 to 162 (LDSY…TFLF), 201 to 221 (AALF…PILI), and 247 to 267 (WNQV…VVLL). Residues 77–268 (LLNSFVMAFA…IPPVVVVLLM (192 aa)) enclose the ABC transmembrane type-1 domain.

Belongs to the binding-protein-dependent transport system permease family. UgpAE subfamily. The complex is composed of two ATP-binding proteins (UgpC), two transmembrane proteins (UgpA and UgpE) and a solute-binding protein (UgpB).

It localises to the cell inner membrane. Its function is as follows. Part of the ABC transporter complex UgpBAEC involved in sn-glycerol-3-phosphate (G3P) import. Probably responsible for the translocation of the substrate across the membrane. The polypeptide is sn-glycerol-3-phosphate transport system permease protein UgpE (ugpE) (Yersinia pestis bv. Antiqua (strain Antiqua)).